A 128-amino-acid polypeptide reads, in one-letter code: Large ribosomal subunit protein eL32 (128 aa).

The protein belongs to the eukaryotic ribosomal protein eL32 family.

In Thermoplasma volcanium (strain ATCC 51530 / DSM 4299 / JCM 9571 / NBRC 15438 / GSS1), this protein is Large ribosomal subunit protein eL32 (rpl32e).